The chain runs to 1447 residues: ATP-dependent helicase SGS1 (1447 aa).

5 disordered regions span residues 37 to 78, 243 to 264, 342 to 430, 552 to 572, and 601 to 639; these read IANK…TATK, KKDGMSKDQSKGRSQVSSQDDN, KEGA…EEKE, KENEDFEEDNNNNGIEYLSDS, and TERKLTGDNEHPPPSWSPKIKREKSSVSQKDEEDDFDDD. A compositionally biased stretch (polar residues) spans 59–78; that stretch reads GTTNFITSIPASGPTNTATK. Residues 243-253 show a composition bias toward basic and acidic residues; it reads KKDGMSKDQSK. A compositionally biased stretch (polar residues) spans 254-264; it reads GRSQVSSQDDN. The span at 363–386 shows a compositional bias: basic and acidic residues; that stretch reads ELTRRRNMRSREPVNYRIPDRDDP. Acidic residues-rich tracts occupy residues 403-415 and 552-561; these read EREEDELTMEAED and KENEDFEEDN. A compositionally biased stretch (basic and acidic residues) spans 601-611; sequence TERKLTGDNEH. The Helicase ATP-binding domain maps to 687–864; the sequence is VNATLQGKDV…IHNLELKEPV (178 aa). 714–721 is an ATP binding site; the sequence is AVVKSGKT. The short motif at 808 to 811 is the DEAH box element; it reads DEAH. The Helicase C-terminal domain occupies 886-1035; the sequence is TIFEICDAVK…NKEKHLNKLQ (150 aa). The HRDC domain occupies 1272 to 1351; that stretch reads LNNLRMTYER…ADLSKKRSSE (80 aa). Residues 1402–1411 are compositionally biased toward polar residues; that stretch reads QIRQSQLPKN. The interval 1402-1447 is disordered; the sequence is QIRQSQLPKNTTSSKSGTRSISKSSKKSANGRRGFRNYRGHYRGRK. Residues 1412–1424 are compositionally biased toward low complexity; it reads TTSSKSGTRSISK. Basic residues predominate over residues 1425–1447; the sequence is SSKKSANGRRGFRNYRGHYRGRK.

It belongs to the helicase family. RecQ subfamily. Heterodimer with TOP3. Forms a complex with TOP3 and RMI1. Forms a ternary complex with a MLH1-MLH3 heterodimer (MutLbeta) during meiosis. Interacts with TOP2. The cofactor is Mg(2+).

It localises to the nucleus. The protein resides in the nucleolus. The enzyme catalyses Couples ATP hydrolysis with the unwinding of duplex DNA by translocating in the 3'-5' direction.. It catalyses the reaction ATP + H2O = ADP + phosphate + H(+). Helicase activity on G-quadruplex DNA is inhibited by ATP-gamma-S. Functionally, ATP-dependent 3'-5' DNA helicase able to unwind duplex DNA or DNA:RNA heteroduplex. Unwinds G-quadruplex DNA; unwinding occurs in the 3'-5' direction, requires a 3' single-stranded end of at least 7 nucleotides. Helicase activity is higher on G-quadruplex substrates than on duplex DNA substrates. Assayed with a catalytic fragment (residues 400-1268). Telomeres and rDNA are notably G-rich; formation of G-quadruplex DNA would block DNA replication and transcription. Acts as an integral component of the S-phase checkpoint response, which arrests cells due to DNA damage or blocked fork progression during DNA replication. Can create a deleterious topological substrate that TOP3 preferentially resolves. The TOP3-SGS1 protein complex may function as a eukaryotic reverse gyrase introducing positive supercoils into extrachromosomal ribosomal DNA rings. Together with topoisomerase II has a role in chromosomal segregation. Maintains rDNA structure where it has a role in re-starting stalled replication forks. The protein is ATP-dependent helicase SGS1 of Saccharomyces cerevisiae (strain ATCC 204508 / S288c) (Baker's yeast).